The following is a 53-amino-acid chain: UPF0391 membrane protein Meso_3392 (53 aa).

The next 2 helical transmembrane spans lie at 4-24 and 33-53; these read WILI…HSLA and ILIA…IAIA.

Belongs to the UPF0391 family.

It is found in the cell membrane. The chain is UPF0391 membrane protein Meso_3392 from Chelativorans sp. (strain BNC1).